A 145-amino-acid chain; its full sequence is 3-hydroxyacyl-[acyl-carrier-protein] dehydratase FabZ (145 aa).

Histidine 47 is a catalytic residue.

This sequence belongs to the thioester dehydratase family. FabZ subfamily.

It localises to the cytoplasm. It carries out the reaction a (3R)-hydroxyacyl-[ACP] = a (2E)-enoyl-[ACP] + H2O. Functionally, involved in unsaturated fatty acids biosynthesis. Catalyzes the dehydration of short chain beta-hydroxyacyl-ACPs and long chain saturated and unsaturated beta-hydroxyacyl-ACPs. The polypeptide is 3-hydroxyacyl-[acyl-carrier-protein] dehydratase FabZ (Ruthia magnifica subsp. Calyptogena magnifica).